The primary structure comprises 393 residues: Ribonucleoside-diphosphate reductase subunit M2 (393 aa).

Ser-18 is subject to Phosphoserine. 3 residues coordinate Fe cation: Asp-142, Glu-173, and His-176. Tyr-180 is an active-site residue. 3 residues coordinate Fe cation: Glu-236, Glu-270, and His-273.

This sequence belongs to the ribonucleoside diphosphate reductase small chain family. As to quaternary structure, heterodimer of a large and a small subunit. It depends on Fe cation as a cofactor.

The protein resides in the cytoplasm. It catalyses the reaction a 2'-deoxyribonucleoside 5'-diphosphate + [thioredoxin]-disulfide + H2O = a ribonucleoside 5'-diphosphate + [thioredoxin]-dithiol. In terms of biological role, provides the precursors necessary for DNA synthesis. Catalyzes the biosynthesis of deoxyribonucleotides from the corresponding ribonucleotides. This Drosophila melanogaster (Fruit fly) protein is Ribonucleoside-diphosphate reductase subunit M2 (RnrS).